The sequence spans 254 residues: 3-deoxy-manno-octulosonate cytidylyltransferase (254 aa).

Belongs to the KdsB family.

The protein localises to the cytoplasm. It catalyses the reaction 3-deoxy-alpha-D-manno-oct-2-ulosonate + CTP = CMP-3-deoxy-beta-D-manno-octulosonate + diphosphate. It functions in the pathway nucleotide-sugar biosynthesis; CMP-3-deoxy-D-manno-octulosonate biosynthesis; CMP-3-deoxy-D-manno-octulosonate from 3-deoxy-D-manno-octulosonate and CTP: step 1/1. Its pathway is bacterial outer membrane biogenesis; lipopolysaccharide biosynthesis. Functionally, activates KDO (a required 8-carbon sugar) for incorporation into bacterial lipopolysaccharide in Gram-negative bacteria. This is 3-deoxy-manno-octulosonate cytidylyltransferase from Pseudomonas paraeruginosa (strain DSM 24068 / PA7) (Pseudomonas aeruginosa (strain PA7)).